We begin with the raw amino-acid sequence, 218 residues long: MGGYRTDDEYDYLFKLVLIGDSGVGKSNLLSRFTKNEFNLESKSTIGVEFATKTLNVDAKVVKAQIWDTAGQERYRAITSAYYRGAVGALLVYDVTRRATFENAARWLKELRDHTDPNIVVMLIGNKSDLRHLVAVPTEDGKSFAERESLYFMETSALEATNVENAFTEVLTQIYRIVSKRAVEAGDSGSSSGLPSKGQTINVKEDSSVLKRFGCCST.

Position 20–27 (20–27) interacts with GTP; sequence GDSGVGKS. The short motif at 42-50 is the Effector region element; that stretch reads SKSTIGVEF. Residues 68 to 72 and 126 to 129 contribute to the GTP site; these read DTAGQ and NKSD. Residues cysteine 215 and cysteine 216 are each lipidated (S-geranylgeranyl cysteine).

Belongs to the small GTPase superfamily. Rab family.

It is found in the cell membrane. The sequence is that of Ras-related protein Rab11D (RAB11D) from Lotus japonicus (Lotus corniculatus var. japonicus).